A 319-amino-acid polypeptide reads, in one-letter code: GTP 3',8-cyclase (319 aa).

A Radical SAM core domain is found at 4 to 219; it reads KHGRKINYLR…SKHSDLIPVE (216 aa). Arg13 contacts GTP. [4Fe-4S] cluster-binding residues include Cys20 and Cys24. Position 26 (Tyr26) interacts with S-adenosyl-L-methionine. Cys27 serves as a coordination point for [4Fe-4S] cluster. Arg63 contacts GTP. Gly67 is an S-adenosyl-L-methionine binding site. Thr94 is a binding site for GTP. Position 118 (Ser118) interacts with S-adenosyl-L-methionine. Lys155 provides a ligand contact to GTP. Residue Met189 coordinates S-adenosyl-L-methionine. [4Fe-4S] cluster is bound by residues Cys249 and Cys252. 254-256 provides a ligand contact to GTP; sequence RVR. Residue Cys266 coordinates [4Fe-4S] cluster.

This sequence belongs to the radical SAM superfamily. MoaA family. As to quaternary structure, monomer and homodimer. [4Fe-4S] cluster is required as a cofactor.

The catalysed reaction is GTP + AH2 + S-adenosyl-L-methionine = (8S)-3',8-cyclo-7,8-dihydroguanosine 5'-triphosphate + 5'-deoxyadenosine + L-methionine + A + H(+). Its pathway is cofactor biosynthesis; molybdopterin biosynthesis. In terms of biological role, catalyzes the cyclization of GTP to (8S)-3',8-cyclo-7,8-dihydroguanosine 5'-triphosphate. The polypeptide is GTP 3',8-cyclase (Clostridium botulinum (strain Okra / Type B1)).